The primary structure comprises 205 residues: MNEANSAMSDARRATIERTTGETSVTLTLTIDGSGRADIQTGIGFLDHMLTLWAKHGLFDLTVRAHGDLHVDEHHTAEDVCICLGRALDQALGTRAGIVRTAHSFVPMDEALALVAVDLGGRPYCVMQAEFATPRVGQLGTDLIGHLFESIAFNGRFNLHAQVLYGRNDHHKIEALFKACGRALDAATRYDPRLGGTIPSTKGVL.

This sequence belongs to the imidazoleglycerol-phosphate dehydratase family.

It is found in the cytoplasm. It catalyses the reaction D-erythro-1-(imidazol-4-yl)glycerol 3-phosphate = 3-(imidazol-4-yl)-2-oxopropyl phosphate + H2O. It participates in amino-acid biosynthesis; L-histidine biosynthesis; L-histidine from 5-phospho-alpha-D-ribose 1-diphosphate: step 6/9. The chain is Imidazoleglycerol-phosphate dehydratase from Chloroflexus aggregans (strain MD-66 / DSM 9485).